The chain runs to 593 residues: Aspartate--tRNA ligase (593 aa).

E180 is an L-aspartate binding site. Positions 204–207 are aspartate; sequence QIFK. R226 is an L-aspartate binding site. ATP contacts are provided by residues 226–228 and Q235; that span reads RDE. H453 lines the L-aspartate pocket. An ATP-binding site is contributed by E487. L-aspartate is bound at residue R494. 539-542 provides a ligand contact to ATP; that stretch reads GLDR.

Belongs to the class-II aminoacyl-tRNA synthetase family. Type 1 subfamily. Homodimer.

It is found in the cytoplasm. The enzyme catalyses tRNA(Asp) + L-aspartate + ATP = L-aspartyl-tRNA(Asp) + AMP + diphosphate. Functionally, catalyzes the attachment of L-aspartate to tRNA(Asp) in a two-step reaction: L-aspartate is first activated by ATP to form Asp-AMP and then transferred to the acceptor end of tRNA(Asp). The polypeptide is Aspartate--tRNA ligase (Clostridium botulinum (strain Okra / Type B1)).